A 338-amino-acid polypeptide reads, in one-letter code: Cytoskeleton protein RodZ (338 aa).

The Cytoplasmic segment spans residues 1–111 (MNTEASQDQT…LGKKHKKRDG (111 aa)). The HTH cro/C1-type domain occupies 19–79 (LRQAREALGL…KLVHLPEDEL (61 aa)). Residues 30–49 (QQMVAERLCLKVSTIRDIEE) constitute a DNA-binding region (H-T-H motif). Residues 112 to 132 (WLMSFTWLIVLVVLGLTGAWW) traverse the membrane as a helical; Signal-anchor for type II membrane protein segment. The Periplasmic portion of the chain corresponds to 133-338 (WQNHQAQQAE…RVARLTVGVE (206 aa)). 2 stretches are compositionally biased toward polar residues: residues 151–163 (SAQLSQNGGQSVP) and 180–195 (PVANSQPSTPTENGTV). The disordered stretch occupies residues 151–253 (SAQLSQNGGQ…LPTADAGVTG (103 aa)). The segment covering 196–209 (PATSSAAPADTANN) has biased composition (low complexity). A compositionally biased stretch (polar residues) spans 210–241 (GVNTTAPQGTTSAESAVVSPSQAPLPSVSTAQ).

Belongs to the RodZ family.

It is found in the cell inner membrane. Cytoskeletal protein that is involved in cell-shape control through regulation of the length of the long axis. In Yersinia enterocolitica serotype O:8 / biotype 1B (strain NCTC 13174 / 8081), this protein is Cytoskeleton protein RodZ.